The sequence spans 177 residues: Translation initiation factor IF-3 (177 aa).

Belongs to the IF-3 family. Monomer.

Its subcellular location is the cytoplasm. Functionally, IF-3 binds to the 30S ribosomal subunit and shifts the equilibrium between 70S ribosomes and their 50S and 30S subunits in favor of the free subunits, thus enhancing the availability of 30S subunits on which protein synthesis initiation begins. This Elusimicrobium minutum (strain Pei191) protein is Translation initiation factor IF-3.